A 147-amino-acid polypeptide reads, in one-letter code: Leghemoglobin (147 aa).

In terms of domain architecture, Globin spans 2–147 (GFTADQEALV…LASAIKKAMS (146 aa)). Y25 and Y30 each carry nitrated tyrosine. Residue S45 coordinates heme b. Phosphoserine is present on S45. H62 serves as a coordination point for O2. 3 residues coordinate heme b: K65, H94, and K97. Y135 carries the post-translational modification Nitrated tyrosine.

The protein belongs to the plant globin family. In terms of assembly, monomer. Post-translationally, nitrated in effective nodules and particularly in hypoxic conditions; this mechanism may play a protective role in the symbiosis by buffering toxic peroxynitrite NO(2)(-). Nitration level decrease during nodule senescence. In terms of processing, phosphorylation at Ser-45 disrupts the molecular environment of its porphyrin ring oxygen binding pocket, thus leading to a reduced oxygen consumption and to the delivery of oxygen O(2) to symbiosomes. As to expression, root nodules.

The protein resides in the cytoplasm. Its subcellular location is the cytosol. It is found in the nucleus. Functionally, leghemoglobin that reversibly binds oxygen O(2) through a pentacoordinated heme iron. In root nodules, facilitates the diffusion of oxygen to the bacteroids while preventing the bacterial nitrogenase from being inactivated by buffering dioxygen, nitric oxide and carbon monoxide, and promoting the formation of reactive oxygen species (ROS, e.g. H(2)O(2)). This role is essential for symbiotic nitrogen fixation (SNF). The protein is Leghemoglobin (LB3) of Medicago sativa (Alfalfa).